Reading from the N-terminus, the 497-residue chain is Pentatricopeptide repeat-containing protein At2g36240 (497 aa).

PPR repeat units lie at residues 156 to 186 (LEPIFRSAIDAYCRARKMDYALLAFDTMKRL), 192 to 226 (NVGVYNTVVNGYVKSGDMDKALRFYQRMGKERAKP), 227 to 261 (DVCTFNILINGYCRSSKFDLALDLFREMKEKGCEP), 262 to 296 (NVVSFNTLIRGFLSSGKIEEGVKMAYEMIELGCRF), 297 to 331 (SEATCEILVDGLCREGRVDDACGLVLDLLNKRVLP), 332 to 366 (SEFDYGSLVEKLCGENKAVRAMEMMEELWKKGQTP), 367 to 401 (CFIACTTLVEGLRKSGRTEKASGFMEKMMNAGILP), 402 to 436 (DSVTFNLLLRDLCSSDHSTDANRLRLLASSKGYEP), and 437 to 471 (DETTYHVLVSGFTKEGRRKEGEVLVNEMLDKDMLP).

Belongs to the PPR family. P subfamily.

This Arabidopsis thaliana (Mouse-ear cress) protein is Pentatricopeptide repeat-containing protein At2g36240.